Here is a 224-residue protein sequence, read N- to C-terminus: uncharacterized protein (224 aa).

Positions 1-23 are cleaved as a signal peptide; it reads MKKLLAAGIIGLLTVSIASPSFA. In terms of domain architecture, VWFA spans 31-224; that stretch reads NVAVLFDGSG…WEKEAQKFTE (194 aa).

To B.subtilis YwmC.

This is an uncharacterized protein from Bacillus subtilis (strain 168).